The primary structure comprises 316 residues: Tetrahydromethanopterin S-methyltransferase subunit H (316 aa).

It belongs to the MtrH family. The complex is composed of 8 subunits; MtrA, MtrB, MtrC, MtrD, MtrE, MtrF, MtrG and MtrH.

The enzyme catalyses 5-methyl-5,6,7,8-tetrahydromethanopterin + coenzyme M + 2 Na(+)(in) = 5,6,7,8-tetrahydromethanopterin + methyl-coenzyme M + 2 Na(+)(out). The protein operates within one-carbon metabolism; methanogenesis from CO(2); methyl-coenzyme M from 5,10-methylene-5,6,7,8-tetrahydromethanopterin: step 2/2. Functionally, part of a complex that catalyzes the formation of methyl-coenzyme M and tetrahydromethanopterin from coenzyme M and methyl-tetrahydromethanopterin. This is an energy-conserving, sodium-ion translocating step. MtrH catalyzes the transfer of the methyl group from methyl-tetrahydromethanopterin to the corrinoid prosthetic group of MtrA. This chain is Tetrahydromethanopterin S-methyltransferase subunit H, found in Methanosarcina acetivorans (strain ATCC 35395 / DSM 2834 / JCM 12185 / C2A).